A 344-amino-acid chain; its full sequence is Nuclear distribution protein nudE-like 1-B (344 aa).

A coiled-coil region spans residues Y26–D189.

It belongs to the nudE family. Phosphorylated in mitosis.

The protein resides in the cytoplasm. It localises to the cytoskeleton. The protein localises to the microtubule organizing center. It is found in the centrosome. Its subcellular location is the spindle. Its function is as follows. Required for organization of the cellular microtubule array and microtubule anchoring at the centrosome. Positively regulates the activity of the minus-end directed microtubule motor protein dynein. May enhance dynein-mediated microtubule sliding by targeting dynein to the microtubule plus end. In Danio rerio (Zebrafish), this protein is Nuclear distribution protein nudE-like 1-B (ndel1b).